Here is a 204-residue protein sequence, read N- to C-terminus: CASP-like protein 2U1 (204 aa).

At 1–36 the chain is on the cytoplasmic side; the sequence is MGVLGGDAHVPIGSQVSPGSVVVTNNESFGHRKLLK. Residues 37-57 form a helical membrane-spanning segment; sequence GVDFLVRIKAFAFCLAVIVLL. The Extracellular segment spans residues 58-84; it reads KNNVQTTVIAPGIVLQAKYNNTKAPVS. N-linked (GlcNAc...) asparagine glycosylation is present at Asn77. The helical transmembrane segment at 85–105 threads the bilayer; it reads LLVLASICCGYAFLQAVVSLL. At 106 to 117 the chain is on the cytoplasmic side; the sequence is SFIRDKRVLNNT. A helical transmembrane segment spans residues 118 to 138; it reads VLAWLTFLLDQVLTYLLLGSA. The Extracellular portion of the chain corresponds to 139–170; it reads AATAEAAYIAKRGEDKVQWKAVCGPFKRFCDH. Residues 171–191 form a helical membrane-spanning segment; it reads FAATVFLSFIAVIAFAVSAAI. Residues 192–204 are Cytoplasmic-facing; that stretch reads SAYYLFRRSKGFK.

It belongs to the Casparian strip membrane proteins (CASP) family. As to quaternary structure, homodimer and heterodimers.

The protein resides in the cell membrane. In Selaginella moellendorffii (Spikemoss), this protein is CASP-like protein 2U1.